The sequence spans 330 residues: Methylthioribose-1-phosphate isomerase (330 aa).

Substrate-binding positions include 49–51 (RGA), arginine 83, and glutamine 179. The active-site Proton donor is aspartate 220. 230–231 (NK) provides a ligand contact to substrate.

The protein belongs to the eIF-2B alpha/beta/delta subunits family. MtnA subfamily.

The enzyme catalyses 5-(methylsulfanyl)-alpha-D-ribose 1-phosphate = 5-(methylsulfanyl)-D-ribulose 1-phosphate. Its pathway is amino-acid biosynthesis; L-methionine biosynthesis via salvage pathway; L-methionine from S-methyl-5-thio-alpha-D-ribose 1-phosphate: step 1/6. Functionally, catalyzes the interconversion of methylthioribose-1-phosphate (MTR-1-P) into methylthioribulose-1-phosphate (MTRu-1-P). The protein is Methylthioribose-1-phosphate isomerase of Thermus thermophilus (strain ATCC BAA-163 / DSM 7039 / HB27).